A 179-amino-acid chain; its full sequence is Translation initiation factor IF-3 (179 aa).

The protein belongs to the IF-3 family. In terms of assembly, monomer.

Its subcellular location is the cytoplasm. In terms of biological role, IF-3 binds to the 30S ribosomal subunit and shifts the equilibrium between 70S ribosomes and their 50S and 30S subunits in favor of the free subunits, thus enhancing the availability of 30S subunits on which protein synthesis initiation begins. In Lactococcus lactis subsp. lactis (strain IL1403) (Streptococcus lactis), this protein is Translation initiation factor IF-3.